A 301-amino-acid polypeptide reads, in one-letter code: Porphobilinogen deaminase (301 aa).

Position 240 is an S-(dipyrrolylmethanemethyl)cysteine (Cys240).

The protein belongs to the HMBS family. Monomer. Requires dipyrromethane as cofactor.

The enzyme catalyses 4 porphobilinogen + H2O = hydroxymethylbilane + 4 NH4(+). Its pathway is porphyrin-containing compound metabolism; protoporphyrin-IX biosynthesis; coproporphyrinogen-III from 5-aminolevulinate: step 2/4. Functionally, tetrapolymerization of the monopyrrole PBG into the hydroxymethylbilane pre-uroporphyrinogen in several discrete steps. The chain is Porphobilinogen deaminase from Clostridioides difficile (strain 630) (Peptoclostridium difficile).